The primary structure comprises 345 residues: cAMP-responsive element modulator (345 aa).

Residues 88–147 (VQVAAIAETDESAESEGVIDSHKRREILSRRPSYRKILNELSSDVPGVPKIEEERSEEEG) enclose the KID domain. Phosphoserine is present on residues S102, S129, S271, S274, and S277. In terms of domain architecture, bZIP spans 286-345 (TRKRELRLMKNREAAKECRRRKKEYVKCLESRVAVLEVQNKKLIEELETLKDICSPKTDY). The tract at residues 287 to 312 (RKRELRLMKNREAAKECRRRKKEYVK) is basic motif. A leucine-zipper region spans residues 314-335 (LESRVAVLEVQNKKLIEELETL).

This sequence belongs to the bZIP family. Binds DNA as a dimer. Interacts with FHL5. Interacts with CDC34. May interact with TSSK4. Post-translationally, isoform 9 is ubiquitinated by CDC34 and RAD6B in order to be degraded by the proteasome. In terms of processing, stimulated by phosphorylation. Phosphorylated on Ser-116 by TSSK4 in vitro. As to expression, expressed in testes (round spermatids) (at protein level). Isoform 14 is the major activator form in testes.

It is found in the nucleus. It localises to the cytoplasm. Its function is as follows. Transcriptional regulator that binds the cAMP response element (CRE), a sequence present in many viral and cellular promoters. Isoforms are either transcriptional activators or repressors. Plays a role in spermatogenesis and is involved in spermatid maturation. May play a role in the regulation of the circadian clock: acts as a transcriptional repressor of the core circadian component PER1 by directly binding to cAMP response elements in its promoter. This is cAMP-responsive element modulator from Homo sapiens (Human).